The following is a 170-amino-acid chain: Small ribosomal subunit protein uS3mA (170 aa).

The transit peptide at methionine 1 to cysteine 30 directs the protein to the mitochondrion.

It belongs to the universal ribosomal protein uS3 family. As to quaternary structure, component of the mitochondrial ribosome small subunit (28S) which comprises a 12S rRNA and about 30 distinct proteins.

It is found in the mitochondrion. The protein is Small ribosomal subunit protein uS3mA (mrps24-a) of Xenopus laevis (African clawed frog).